A 566-amino-acid polypeptide reads, in one-letter code: Proline--tRNA ligase 1 (566 aa).

The protein belongs to the class-II aminoacyl-tRNA synthetase family. ProS type 1 subfamily. In terms of assembly, homodimer.

The protein resides in the cytoplasm. The catalysed reaction is tRNA(Pro) + L-proline + ATP = L-prolyl-tRNA(Pro) + AMP + diphosphate. Catalyzes the attachment of proline to tRNA(Pro) in a two-step reaction: proline is first activated by ATP to form Pro-AMP and then transferred to the acceptor end of tRNA(Pro). As ProRS can inadvertently accommodate and process non-cognate amino acids such as alanine and cysteine, to avoid such errors it has two additional distinct editing activities against alanine. One activity is designated as 'pretransfer' editing and involves the tRNA(Pro)-independent hydrolysis of activated Ala-AMP. The other activity is designated 'posttransfer' editing and involves deacylation of mischarged Ala-tRNA(Pro). The misacylated Cys-tRNA(Pro) is not edited by ProRS. The chain is Proline--tRNA ligase 1 from Bacillus thuringiensis subsp. konkukian (strain 97-27).